Reading from the N-terminus, the 189-residue chain is Nucleoside diphosphate kinase 6 (189 aa).

The ATP site is built by Lys-19, Phe-68, Arg-96, Thr-102, Arg-116, and Asn-126. His-129 serves as the catalytic Pros-phosphohistidine intermediate.

It belongs to the NDK family. It depends on Mg(2+) as a cofactor.

The enzyme catalyses a 2'-deoxyribonucleoside 5'-diphosphate + ATP = a 2'-deoxyribonucleoside 5'-triphosphate + ADP. The catalysed reaction is a ribonucleoside 5'-diphosphate + ATP = a ribonucleoside 5'-triphosphate + ADP. Its function is as follows. Major role in the synthesis of nucleoside triphosphates other than ATP. The ATP gamma phosphate is transferred to the NDP beta phosphate via a ping-pong mechanism, using a phosphorylated active-site intermediate. The chain is Nucleoside diphosphate kinase 6 (Nme6) from Mus musculus (Mouse).